We begin with the raw amino-acid sequence, 399 residues long: Serine/threonine-protein kinase PKZ1 (399 aa).

The interval 30–50 (PMQCAYQTQSHSNPEGAKRGR) is disordered. Residues 92–371 (WQLFDQIGAG…ADQMLQHPWM (280 aa)) form the Protein kinase domain. Residues 98–106 (IGAGAFGVV) and K121 each bind ATP. The active-site Proton acceptor is the D219.

Belongs to the protein kinase superfamily. CAMK Ser/Thr protein kinase family.

The enzyme catalyses L-seryl-[protein] + ATP = O-phospho-L-seryl-[protein] + ADP + H(+). It carries out the reaction L-threonyl-[protein] + ATP = O-phospho-L-threonyl-[protein] + ADP + H(+). In terms of biological role, may regulate an early stage of the zoospore pathway. The sequence is that of Serine/threonine-protein kinase PKZ1 from Phytophthora infestans (strain T30-4) (Potato late blight agent).